A 555-amino-acid chain; its full sequence is Oxygen-dependent choline dehydrogenase (555 aa).

An FAD-binding site is contributed by 4–33 (DYIIIGAGSAGNVLATRLTEDPDVTVLLLE). His-473 functions as the Proton acceptor in the catalytic mechanism.

The protein belongs to the GMC oxidoreductase family. The cofactor is FAD.

It carries out the reaction choline + A = betaine aldehyde + AH2. The catalysed reaction is betaine aldehyde + NAD(+) + H2O = glycine betaine + NADH + 2 H(+). It functions in the pathway amine and polyamine biosynthesis; betaine biosynthesis via choline pathway; betaine aldehyde from choline (cytochrome c reductase route): step 1/1. Involved in the biosynthesis of the osmoprotectant glycine betaine. Catalyzes the oxidation of choline to betaine aldehyde and betaine aldehyde to glycine betaine at the same rate. The chain is Oxygen-dependent choline dehydrogenase from Proteus mirabilis (strain HI4320).